The primary structure comprises 424 residues: Kynureninase (424 aa).

Pyridoxal 5'-phosphate-binding positions include leucine 106, threonine 107, 134–137, aspartate 219, histidine 222, and tyrosine 244; that span reads FPSD. Lysine 245 is subject to N6-(pyridoxal phosphate)lysine. Pyridoxal 5'-phosphate contacts are provided by tryptophan 274 and asparagine 302.

The protein belongs to the kynureninase family. Homodimer. It depends on pyridoxal 5'-phosphate as a cofactor.

The enzyme catalyses L-kynurenine + H2O = anthranilate + L-alanine + H(+). It catalyses the reaction 3-hydroxy-L-kynurenine + H2O = 3-hydroxyanthranilate + L-alanine + H(+). Its pathway is amino-acid degradation; L-kynurenine degradation; L-alanine and anthranilate from L-kynurenine: step 1/1. The protein operates within cofactor biosynthesis; NAD(+) biosynthesis; quinolinate from L-kynurenine: step 2/3. Catalyzes the cleavage of L-kynurenine (L-Kyn) and L-3-hydroxykynurenine (L-3OHKyn) into anthranilic acid (AA) and 3-hydroxyanthranilic acid (3-OHAA), respectively. This Xanthomonas campestris pv. campestris (strain B100) protein is Kynureninase.